The following is a 459-amino-acid chain: MNFKAIILAAGKGTRMKSKYPKVIHKVCGKEMVNHIIDVSKKSGVKDTVVILGHEADVVKEKLAEEIIIAMQTEQLGTGHAVKMAKEYINDEDTIVVLCGDTPLIKEETLKRLFEYHIENKYHATVLTTRVGNPTGYGRIIRDKKGDLLKIVEQKDANSEEKMISEINSGIYCFNGKSLREALDLLNNNNSQGEYYLTDTAKIMRDKGLKVGAFAGSTIEELMGVNSRVELSKAEEIMRRRINESHMVNGVTIIDTNSTYIESDVMIGNDTIIYPGVMLQGKTRIGSDCIIGMNSSITNSEIGDGTEIKNSTIIDSKVGENSTVGPYAYLRPKSDLGNNVKIGDFVEVKNAIIEDGSKASHLSYIGDAHVGKNVNIGCGVVFVNYDGKNKFKSIVKDNAFIGSNSNLVAPVVVEEKGYIATGSTITHDVPDGALAIARERQVIKEGWVEKKNQKDDQSK.

The pyrophosphorylase stretch occupies residues 1-228; it reads MNFKAIILAA…IEELMGVNSR (228 aa). UDP-N-acetyl-alpha-D-glucosamine-binding positions include 8–11, K22, Q72, and 77–78; these read LAAG and GT. A Mg(2+)-binding site is contributed by D101. UDP-N-acetyl-alpha-D-glucosamine is bound by residues G138, E153, N168, and N226. N226 contacts Mg(2+). A linker region spans residues 229–249; sequence VELSKAEEIMRRRINESHMVN. Residues 250–459 form an N-acetyltransferase region; it reads GVTIIDTNST…KKNQKDDQSK (210 aa). UDP-N-acetyl-alpha-D-glucosamine contacts are provided by R331 and K349. H361 functions as the Proton acceptor in the catalytic mechanism. Residues Y364 and N375 each contribute to the UDP-N-acetyl-alpha-D-glucosamine site. Residues 384-385, S403, T421, and R438 contribute to the acetyl-CoA site; that span reads NY.

This sequence in the N-terminal section; belongs to the N-acetylglucosamine-1-phosphate uridyltransferase family. In the C-terminal section; belongs to the transferase hexapeptide repeat family. In terms of assembly, homotrimer. Mg(2+) serves as cofactor.

It localises to the cytoplasm. It catalyses the reaction alpha-D-glucosamine 1-phosphate + acetyl-CoA = N-acetyl-alpha-D-glucosamine 1-phosphate + CoA + H(+). It carries out the reaction N-acetyl-alpha-D-glucosamine 1-phosphate + UTP + H(+) = UDP-N-acetyl-alpha-D-glucosamine + diphosphate. Its pathway is nucleotide-sugar biosynthesis; UDP-N-acetyl-alpha-D-glucosamine biosynthesis; N-acetyl-alpha-D-glucosamine 1-phosphate from alpha-D-glucosamine 6-phosphate (route II): step 2/2. It functions in the pathway nucleotide-sugar biosynthesis; UDP-N-acetyl-alpha-D-glucosamine biosynthesis; UDP-N-acetyl-alpha-D-glucosamine from N-acetyl-alpha-D-glucosamine 1-phosphate: step 1/1. It participates in bacterial outer membrane biogenesis; LPS lipid A biosynthesis. In terms of biological role, catalyzes the last two sequential reactions in the de novo biosynthetic pathway for UDP-N-acetylglucosamine (UDP-GlcNAc). The C-terminal domain catalyzes the transfer of acetyl group from acetyl coenzyme A to glucosamine-1-phosphate (GlcN-1-P) to produce N-acetylglucosamine-1-phosphate (GlcNAc-1-P), which is converted into UDP-GlcNAc by the transfer of uridine 5-monophosphate (from uridine 5-triphosphate), a reaction catalyzed by the N-terminal domain. The polypeptide is Bifunctional protein GlmU (Clostridioides difficile (strain 630) (Peptoclostridium difficile)).